Consider the following 196-residue polypeptide: Ribosome maturation factor RimP (196 aa).

The interval 163-196 (GLAPSKPTGPAPKRPKPKTNSSSNEPAAKKPRAE) is disordered.

The protein belongs to the RimP family.

The protein resides in the cytoplasm. Functionally, required for maturation of 30S ribosomal subunits. This chain is Ribosome maturation factor RimP, found in Stenotrophomonas maltophilia (strain R551-3).